The primary structure comprises 99 residues: Ubiquitin-related modifier 1 homolog 2 (99 aa).

1-thioglycine is present on G99. A Glycyl lysine isopeptide (Gly-Lys) (interchain with K-? in acceptor proteins) cross-link involves residue G99.

This sequence belongs to the URM1 family. Post-translationally, C-terminal thiocarboxylation occurs in 2 steps, it is first acyl-adenylated (-COAMP) via the hesA/moeB/thiF part of the MOCS3 homolog, then thiocarboxylated (-COSH) via the rhodanese domain of the MOCS3 homolog.

Its subcellular location is the cytoplasm. Its pathway is tRNA modification; 5-methoxycarbonylmethyl-2-thiouridine-tRNA biosynthesis. Its function is as follows. Acts as a sulfur carrier required for 2-thiolation of mcm(5)S(2)U at tRNA wobble positions of cytosolic tRNA(Lys), tRNA(Glu) and tRNA(Gln). Serves as sulfur donor in tRNA 2-thiolation reaction by being thiocarboxylated (-COSH) at its C-terminus by MOCS3. The sulfur is then transferred to tRNA to form 2-thiolation of mcm(5)S(2)U. Also acts as a ubiquitin-like protein (UBL) that is covalently conjugated via an isopeptide bond to lysine residues of target proteins. The thiocarboxylated form serves as substrate for conjugation and oxidative stress specifically induces the formation of UBL-protein conjugates. This Arabidopsis thaliana (Mouse-ear cress) protein is Ubiquitin-related modifier 1 homolog 2.